The sequence spans 425 residues: Probable mannosyltransferase KTR2 (425 aa).

The Cytoplasmic segment spans residues 1–13; that stretch reads MQICKVFLTQVKK. The helical; Signal-anchor for type II membrane protein transmembrane segment at 14 to 33 threads the bilayer; it reads LLFVSLLFCLIAQTCWLALV. Positions 34–89 are stem region; that stretch reads PYQRQLSLDSYFFRRSREVSSRYDFTRRRHMNQTLKLSSNTYNDEPLNKTKGIKNQ. Topologically, residues 34–425 are lumenal; sequence PYQRQLSLDS…SGKYFLKHDS (392 aa). N-linked (GlcNAc...) asparagine glycosylation is found at Asn-65, Asn-81, Asn-92, and Asn-167. A catalytic region spans residues 90-425; the sequence is RENATLLMLV…SGKYFLKHDS (336 aa). Glu-313 acts as the Nucleophile in catalysis.

The protein belongs to the glycosyltransferase 15 family.

It localises to the golgi apparatus membrane. The protein operates within protein modification; protein glycosylation. Involved in N-linked glycosylation. Transfers an alpha-D-mannosyl residue from GDP-mannose into lipid-linked oligosaccharide, forming an alpha-(1-&gt;2)-D-mannosyl-D-mannose linkage. The sequence is that of Probable mannosyltransferase KTR2 (KTR2) from Saccharomyces cerevisiae (strain ATCC 204508 / S288c) (Baker's yeast).